The following is a 698-amino-acid chain: Polyphosphate kinase 1 (698 aa).

Asn-46 provides a ligand contact to ATP. Mg(2+) is bound by residues Arg-377 and Arg-407. His-437 serves as the catalytic Phosphohistidine intermediate. The ATP site is built by Tyr-470, Arg-566, and His-594.

Belongs to the polyphosphate kinase 1 (PPK1) family. Mg(2+) is required as a cofactor. Post-translationally, an intermediate of this reaction is the autophosphorylated ppk in which a phosphate is covalently linked to a histidine residue through a N-P bond.

The enzyme catalyses [phosphate](n) + ATP = [phosphate](n+1) + ADP. Catalyzes the reversible transfer of the terminal phosphate of ATP to form a long-chain polyphosphate (polyP). The chain is Polyphosphate kinase 1 from Chlorobaculum tepidum (strain ATCC 49652 / DSM 12025 / NBRC 103806 / TLS) (Chlorobium tepidum).